We begin with the raw amino-acid sequence, 863 residues long: Neuroligin-1 (863 aa).

An N-terminal signal peptide occupies residues 1–45; that stretch reads MALPRCTWPNYVWRAVMACLVHRGLGAPLTLCMLGCLLQAGHVLS. The Extracellular segment spans residues 46–717; that stretch reads QKLDDVDPLV…DQRDYSTELS (672 aa). Residue N109 is glycosylated (N-linked (GlcNAc...) (complex) asparagine). Cysteines 117 and 153 form a disulfide. Residues 183-212 form a disordered region; sequence KGGPLTKKQTDDLGDNDGAEDEDIRDSGGP. Residues 194–206 show a composition bias toward acidic residues; it reads DLGDNDGAEDEDI. N-linked (GlcNAc...) (complex) asparagine glycans are attached at residues N323 and N363. Intrachain disulfides connect C362–C373 and C532–C566. Residue N567 is glycosylated (N-linked (GlcNAc...) asparagine). A disordered region spans residues 670 to 708; that stretch reads PSTDITFRPTRKNSVPVTSAFPTAKQDDPKQQPSPFSVD. Residues 681 to 690 show a composition bias toward polar residues; sequence KNSVPVTSAF. O-linked (GalNAc...) serine glycosylation is found at S703 and S706. The chain crosses the membrane as a helical span at residues 718 to 738; that stretch reads VTIAVGASLLFLNILAFAALY. The Cytoplasmic segment spans residues 739 to 863; that stretch reads YKKDKRRHDV…HPHSHSTTRV (125 aa). The tract at residues 842-863 is disordered; sequence GGQNNTLPHPHPHPHSHSTTRV. Basic residues predominate over residues 851–863; the sequence is PHPHPHSHSTTRV.

Belongs to the type-B carboxylesterase/lipase family. In terms of assembly, interacts with neurexins NRXN1, NRXN2 and NRXN3. Interaction with neurexins is mediated by heparan sulfate glycan modification on neurexin. Interacts with NLGN3. Interacts with AIP1 and PDZRN3. Interacts (via its C-terminus) with DLG4/PSD-95 (via PDZ domain 3). Interacts with GOPC. Expressed in the blood vessel walls (at protein level). Highly expressed in brain through prenatal stages, and at lower levels in pancreas islet beta cells.

The protein localises to the cell membrane. It localises to the postsynaptic density. The protein resides in the synaptic cleft. Its subcellular location is the synaptic cell membrane. Cell surface protein involved in cell-cell-interactions via its interactions with neurexin family members. Plays a role in synapse function and synaptic signal transmission, and probably mediates its effects by recruiting and clustering other synaptic proteins. May promote the initial formation of synapses, but is not essential for this. In vitro, triggers the de novo formation of presynaptic structures. May be involved in specification of excitatory synapses. Required to maintain wakefulness quality and normal synchrony of cerebral cortex activity during wakefulness and sleep. The protein is involved in nervous system development. The protein is Neuroligin-1 (NLGN1) of Homo sapiens (Human).